Reading from the N-terminus, the 1201-residue chain is HEAT repeat-containing protein 6 (1201 aa).

The disordered stretch occupies residues 1–25 (MAGKVTFLGSNSSFSPDGKTQGFKS). An HEAT 1 repeat occupies 182–221 (PDLLGPSGVLVKYGDPKQPDIELRRSAVHCIANLCLSVPS). The segment at 321 to 390 (AVKPEPAQDT…SQSSMLTSPS (70 aa)) is disordered. Over residues 341–352 (QKKRKSRGKGKK) the composition is skewed to basic residues. Positions 375–390 (SGWSHGSQSSMLTSPS) are enriched in polar residues. 3 HEAT repeats span residues 460–498 (GIGG…GSRQ), 523–560 (SIRE…NVPY), and 566–603 (GLLS…TQAP). Residues 618 to 633 (SSLGSGISTPQESPLS) are compositionally biased toward polar residues. The disordered stretch occupies residues 618–653 (SSLGSGISTPQESPLSWRQPARRDEEASSPAAAEGP).

The chain is HEAT repeat-containing protein 6 (heatr6) from Danio rerio (Zebrafish).